Reading from the N-terminus, the 262-residue chain is Putative hydro-lyase cu1581 (262 aa).

This sequence belongs to the D-glutamate cyclase family.

The chain is Putative hydro-lyase cu1581 from Corynebacterium urealyticum (strain ATCC 43042 / DSM 7109).